A 266-amino-acid chain; its full sequence is Non-structural maintenance of chromosomes element 1 homolog (266 aa).

Positions 1 to 102 are interaction with NSMCE3; that stretch reads MQGSTRRMSV…SISKMATDFA (102 aa). The segment at 191 to 232 adopts an RING-type; atypical zinc-finger fold; it reads CNICHSLLIQGQSCETCGIRMHLPCVAKYFQSNAEPRCPHCN. The segment at 245-266 is disordered; the sequence is PEKERESGVSKSNKKSLRSRQH. Phosphoserine is present on Ser251. The segment covering 256-266 has biased composition (basic residues); it reads SNKKSLRSRQH.

Belongs to the NSE1 family. As to quaternary structure, component of the SMC5-SMC6 complex which consists at least of SMC5, SMC6, NSMCE2, NSMCE1, NSMCE4A or EID3 and NSMCE3. NSMCE1, NSMCE4A or EID3 and NSMCE3 probably form a subcomplex that bridges the head domains of the SMC5-SMC6 heterodimer. Interacts with NSMCE3. Ubiquitinated.

The protein localises to the nucleus. The protein resides in the chromosome. It localises to the telomere. The catalysed reaction is S-ubiquitinyl-[E2 ubiquitin-conjugating enzyme]-L-cysteine + [acceptor protein]-L-lysine = [E2 ubiquitin-conjugating enzyme]-L-cysteine + N(6)-ubiquitinyl-[acceptor protein]-L-lysine.. In terms of biological role, RING-type zinc finger-containing E3 ubiquitin ligase that assembles with melanoma antigen protein (MAGE) to catalyze the direct transfer of ubiquitin from E2 ubiquitin-conjugating enzyme to a specific substrate. Within MAGE-RING ubiquitin ligase complex, MAGE stimulates and specifies ubiquitin ligase activity likely through recruitment and/or stabilization of the E2 ubiquitin-conjugating enzyme at the E3:substrate complex. Involved in maintenance of genome integrity, DNA damage response and DNA repair. NSMCE3/MAGEG1 and NSMCE1 ubiquitin ligase are components of SMC5-SMC6 complex and may positively regulate homologous recombination-mediated DNA repair. The protein is Non-structural maintenance of chromosomes element 1 homolog (NSMCE1) of Pongo abelii (Sumatran orangutan).